The following is a 247-amino-acid chain: Proteasome subunit alpha (247 aa).

This sequence belongs to the peptidase T1A family. The 20S proteasome core is composed of 14 alpha and 14 beta subunits that assemble into four stacked heptameric rings, resulting in a barrel-shaped structure. The two inner rings, each composed of seven catalytic beta subunits, are sandwiched by two outer rings, each composed of seven alpha subunits. The catalytic chamber with the active sites is on the inside of the barrel. Has a gated structure, the ends of the cylinder being occluded by the N-termini of the alpha-subunits. Is capped at one or both ends by the proteasome regulatory ATPase, PAN.

It is found in the cytoplasm. The formation of the proteasomal ATPase PAN-20S proteasome complex, via the docking of the C-termini of PAN into the intersubunit pockets in the alpha-rings, triggers opening of the gate for substrate entry. Interconversion between the open-gate and close-gate conformations leads to a dynamic regulation of the 20S proteasome proteolysis activity. In terms of biological role, component of the proteasome core, a large protease complex with broad specificity involved in protein degradation. The chain is Proteasome subunit alpha from Methanosarcina thermophila.